Here is a 94-residue protein sequence, read N- to C-terminus: Small ribosomal subunit protein uS17 (94 aa).

Belongs to the universal ribosomal protein uS17 family. Part of the 30S ribosomal subunit.

Functionally, one of the primary rRNA binding proteins, it binds specifically to the 5'-end of 16S ribosomal RNA. The polypeptide is Small ribosomal subunit protein uS17 (Streptomyces avermitilis (strain ATCC 31267 / DSM 46492 / JCM 5070 / NBRC 14893 / NCIMB 12804 / NRRL 8165 / MA-4680)).